The sequence spans 420 residues: Serine hydroxymethyltransferase (420 aa).

Residues L121 and 125-127 (GHL) each bind (6S)-5,6,7,8-tetrahydrofolate. K229 bears the N6-(pyridoxal phosphate)lysine mark.

This sequence belongs to the SHMT family. As to quaternary structure, homodimer. It depends on pyridoxal 5'-phosphate as a cofactor.

The protein localises to the cytoplasm. The catalysed reaction is (6R)-5,10-methylene-5,6,7,8-tetrahydrofolate + glycine + H2O = (6S)-5,6,7,8-tetrahydrofolate + L-serine. The protein operates within one-carbon metabolism; tetrahydrofolate interconversion. It functions in the pathway amino-acid biosynthesis; glycine biosynthesis; glycine from L-serine: step 1/1. In terms of biological role, catalyzes the reversible interconversion of serine and glycine with tetrahydrofolate (THF) serving as the one-carbon carrier. This reaction serves as the major source of one-carbon groups required for the biosynthesis of purines, thymidylate, methionine, and other important biomolecules. Also exhibits THF-independent aldolase activity toward beta-hydroxyamino acids, producing glycine and aldehydes, via a retro-aldol mechanism. This is Serine hydroxymethyltransferase from Pasteurella multocida (strain Pm70).